Reading from the N-terminus, the 179-residue chain is ATP synthase subunit delta (179 aa).

The protein belongs to the ATPase delta chain family. As to quaternary structure, F-type ATPases have 2 components, F(1) - the catalytic core - and F(0) - the membrane proton channel. F(1) has five subunits: alpha(3), beta(3), gamma(1), delta(1), epsilon(1). F(0) has three main subunits: a(1), b(2) and c(10-14). The alpha and beta chains form an alternating ring which encloses part of the gamma chain. F(1) is attached to F(0) by a central stalk formed by the gamma and epsilon chains, while a peripheral stalk is formed by the delta and b chains.

The protein localises to the cell inner membrane. Functionally, f(1)F(0) ATP synthase produces ATP from ADP in the presence of a proton or sodium gradient. F-type ATPases consist of two structural domains, F(1) containing the extramembraneous catalytic core and F(0) containing the membrane proton channel, linked together by a central stalk and a peripheral stalk. During catalysis, ATP synthesis in the catalytic domain of F(1) is coupled via a rotary mechanism of the central stalk subunits to proton translocation. This protein is part of the stalk that links CF(0) to CF(1). It either transmits conformational changes from CF(0) to CF(1) or is implicated in proton conduction. This Acidobacterium capsulatum (strain ATCC 51196 / DSM 11244 / BCRC 80197 / JCM 7670 / NBRC 15755 / NCIMB 13165 / 161) protein is ATP synthase subunit delta.